A 1342-amino-acid chain; its full sequence is DNA-directed RNA polymerase subunit beta (1342 aa).

The protein belongs to the RNA polymerase beta chain family. The RNAP catalytic core consists of 2 alpha, 1 beta, 1 beta' and 1 omega subunit. When a sigma factor is associated with the core the holoenzyme is formed, which can initiate transcription.

The catalysed reaction is RNA(n) + a ribonucleoside 5'-triphosphate = RNA(n+1) + diphosphate. In terms of biological role, DNA-dependent RNA polymerase catalyzes the transcription of DNA into RNA using the four ribonucleoside triphosphates as substrates. This is DNA-directed RNA polymerase subunit beta from Shewanella amazonensis (strain ATCC BAA-1098 / SB2B).